The chain runs to 619 residues: Dihydroxy-acid dehydratase (619 aa).

Asp81 serves as a coordination point for Mg(2+). Position 122 (Cys122) interacts with [2Fe-2S] cluster. Residues Asp123 and Lys124 each coordinate Mg(2+). N6-carboxylysine is present on Lys124. Cys198 is a [2Fe-2S] cluster binding site. Residue Glu494 participates in Mg(2+) binding. Ser520 functions as the Proton acceptor in the catalytic mechanism.

Belongs to the IlvD/Edd family. Homodimer. The cofactor is [2Fe-2S] cluster. Requires Mg(2+) as cofactor.

It catalyses the reaction (2R)-2,3-dihydroxy-3-methylbutanoate = 3-methyl-2-oxobutanoate + H2O. The catalysed reaction is (2R,3R)-2,3-dihydroxy-3-methylpentanoate = (S)-3-methyl-2-oxopentanoate + H2O. It participates in amino-acid biosynthesis; L-isoleucine biosynthesis; L-isoleucine from 2-oxobutanoate: step 3/4. The protein operates within amino-acid biosynthesis; L-valine biosynthesis; L-valine from pyruvate: step 3/4. In terms of biological role, functions in the biosynthesis of branched-chain amino acids. Catalyzes the dehydration of (2R,3R)-2,3-dihydroxy-3-methylpentanoate (2,3-dihydroxy-3-methylvalerate) into 2-oxo-3-methylpentanoate (2-oxo-3-methylvalerate) and of (2R)-2,3-dihydroxy-3-methylbutanoate (2,3-dihydroxyisovalerate) into 2-oxo-3-methylbutanoate (2-oxoisovalerate), the penultimate precursor to L-isoleucine and L-valine, respectively. The protein is Dihydroxy-acid dehydratase of Neisseria meningitidis serogroup C / serotype 2a (strain ATCC 700532 / DSM 15464 / FAM18).